The sequence spans 612 residues: Protein MUK1 (612 aa).

Basic and acidic residues predominate over residues 40–50 (EDQNDNERSSC). The tract at residues 40 to 66 (EDQNDNERSSCDGDENSTTGERLENNK) is disordered. A compositionally biased stretch (polar residues) spans 55-66 (NSTTGERLENNK). Residues Ser67, Ser163, Ser185, and Ser245 each carry the phosphoserine modification. The 142-residue stretch at 273 to 414 (TEYNKLLNEK…VEGLTKNDFS (142 aa)) folds into the VPS9 domain. The tract at residues 494-560 (IRSYTPPHPN…SSASLEHGNR (67 aa)) is disordered. Over residues 503-517 (NNTSNNNLHSSNNLN) the composition is skewed to low complexity. The span at 518 to 529 (IPRSSSQLSMEL) shows a compositional bias: polar residues. Positions 530–542 (SNRDTTEMSRDGS) are enriched in basic and acidic residues. Residues 543–554 (RSTSSSSRSSAS) show a composition bias toward low complexity.

It localises to the cytoplasm. Functionally, putative GTPase-activating protein. This chain is Protein MUK1 (MUK1), found in Saccharomyces cerevisiae (strain ATCC 204508 / S288c) (Baker's yeast).